The sequence spans 71 residues: Sec-independent protein translocase protein TatA (71 aa).

The chain crosses the membrane as a helical span at residues 1-21; the sequence is MGSFSIWHWLIVLVVVLLLFG. The tract at residues 47–71 is disordered; sequence AEEAKTVEHRTDEPVGEVKQKASKS. Residues 49-71 are compositionally biased toward basic and acidic residues; sequence EAKTVEHRTDEPVGEVKQKASKS.

This sequence belongs to the TatA/E family. The Tat system comprises two distinct complexes: a TatABC complex, containing multiple copies of TatA, TatB and TatC subunits, and a separate TatA complex, containing only TatA subunits. Substrates initially bind to the TatABC complex, which probably triggers association of the separate TatA complex to form the active translocon.

The protein localises to the cell inner membrane. In terms of biological role, part of the twin-arginine translocation (Tat) system that transports large folded proteins containing a characteristic twin-arginine motif in their signal peptide across membranes. TatA could form the protein-conducting channel of the Tat system. This chain is Sec-independent protein translocase protein TatA, found in Chelativorans sp. (strain BNC1).